We begin with the raw amino-acid sequence, 379 residues long: Succinyl-diaminopimelate desuccinylase (379 aa).

Zn(2+) is bound at residue H70. Residue D72 is part of the active site. D103 contacts Zn(2+). Residue E137 is the Proton acceptor of the active site. Residues E138, E166, and H352 each coordinate Zn(2+).

Belongs to the peptidase M20A family. DapE subfamily. Homodimer. Requires Zn(2+) as cofactor. The cofactor is Co(2+).

The enzyme catalyses N-succinyl-(2S,6S)-2,6-diaminopimelate + H2O = (2S,6S)-2,6-diaminopimelate + succinate. It functions in the pathway amino-acid biosynthesis; L-lysine biosynthesis via DAP pathway; LL-2,6-diaminopimelate from (S)-tetrahydrodipicolinate (succinylase route): step 3/3. Catalyzes the hydrolysis of N-succinyl-L,L-diaminopimelic acid (SDAP), forming succinate and LL-2,6-diaminopimelate (DAP), an intermediate involved in the bacterial biosynthesis of lysine and meso-diaminopimelic acid, an essential component of bacterial cell walls. The sequence is that of Succinyl-diaminopimelate desuccinylase from Burkholderia orbicola (strain MC0-3).